The chain runs to 170 residues: Putative pre-16S rRNA nuclease (170 aa).

Basic and acidic residues predominate over residues 1–18 (MGTDDRLPDRPGADDPGR). A disordered region spans residues 1-22 (MGTDDRLPDRPGADDPGRGRRI).

It belongs to the YqgF nuclease family.

It is found in the cytoplasm. Could be a nuclease involved in processing of the 5'-end of pre-16S rRNA. This chain is Putative pre-16S rRNA nuclease, found in Mycolicibacterium smegmatis (strain ATCC 700084 / mc(2)155) (Mycobacterium smegmatis).